The primary structure comprises 386 residues: GTPase Obg (386 aa).

In terms of domain architecture, Obg spans 1-159 (MKFVDEAVIR…RSLKLELMLL (159 aa)). Residues 160-333 (ADVGLLGMPN…LSLKLVDFID (174 aa)) enclose the OBG-type G domain. Residues 166-173 (GMPNAGKS), 191-195 (FTTLV), 213-216 (DIPG), 283-286 (NKKD), and 314-316 (SAY) each bind GTP. Ser-173 and Thr-193 together coordinate Mg(2+). The disordered stretch occupies residues 356-375 (KDSDSLNEDFDDSDDDDFDD). The span at 360–375 (SLNEDFDDSDDDDFDD) shows a compositional bias: acidic residues.

This sequence belongs to the TRAFAC class OBG-HflX-like GTPase superfamily. OBG GTPase family. Monomer. The cofactor is Mg(2+).

The protein localises to the cytoplasm. Functionally, an essential GTPase which binds GTP, GDP and possibly (p)ppGpp with moderate affinity, with high nucleotide exchange rates and a fairly low GTP hydrolysis rate. Plays a role in control of the cell cycle, stress response, ribosome biogenesis and in those bacteria that undergo differentiation, in morphogenesis control. The polypeptide is GTPase Obg (Shewanella sediminis (strain HAW-EB3)).